We begin with the raw amino-acid sequence, 304 residues long: GMP synthase [glutamine-hydrolyzing] subunit B (304 aa).

The GMPS ATP-PPase domain maps to 2-183; that stretch reads VKVEKFIPNA…LDLPEEICER (182 aa). ATP is bound at residue 28–34; the sequence is SGGVDSS.

As to quaternary structure, heterodimer composed of a glutamine amidotransferase subunit (A) and a GMP-binding subunit (B).

It carries out the reaction XMP + L-glutamine + ATP + H2O = GMP + L-glutamate + AMP + diphosphate + 2 H(+). The protein operates within purine metabolism; GMP biosynthesis; GMP from XMP (L-Gln route): step 1/1. In terms of biological role, catalyzes the synthesis of GMP from XMP. The protein is GMP synthase [glutamine-hydrolyzing] subunit B of Methanococcoides burtonii (strain DSM 6242 / NBRC 107633 / OCM 468 / ACE-M).